A 486-amino-acid chain; its full sequence is Probable transporter MCH1 (486 aa).

The Cytoplasmic portion of the chain corresponds to 1 to 29 (MPLSKVEHYLSYHTRLLLPHVLSLQSSHR). The chain crosses the membrane as a helical span at residues 30–50 (VAYIFSLLSAVSTGFITLISL). At 51–67 (YSQPWQKHLNYSSWQIN) the chain is on the vacuolar side. N60 is a glycosylation site (N-linked (GlcNAc...) asparagine). The chain crosses the membrane as a helical span at residues 68–88 (TIASMTNLGMYLTPPILGMIA). Residues 89 to 93 (DSHGP) lie on the Cytoplasmic side of the membrane. Residues 94–114 (ITLSLLAIIGFIPSYSYLAYV) form a helical membrane-spanning segment. Residues 115 to 133 (FNHPELSLGGNGDSSFNLS) are Vacuolar-facing. N-linked (GlcNAc...) asparagine glycosylation is present at N131. The chain crosses the membrane as a helical span at residues 134–154 (IICFVFIGISTSALYFSALLT). Over 155 to 163 (CTKLYPHTK) the chain is Cytoplasmic. The helical transmembrane segment at 164-184 (LLSISLPTTCYGISSVVGSQL) threads the bilayer. The Vacuolar portion of the chain corresponds to 185-212 (LRIKWFWSSNASSSSSNSDLNLGRVFQT). N194 is a glycosylation site (N-linked (GlcNAc...) asparagine). Residues 213-233 (FALVYVVIGLLAWIATSVVSL) traverse the membrane as a helical segment. The Cytoplasmic portion of the chain corresponds to 234–279 (LHFNEEQDNQKRLDDQTDVEQSPLLERSNHVQEKFTQTMLRIFSDP). S255 carries the post-translational modification Phosphoserine. Residues 280-300 (VTYILAVSILLSLGPLEMFIA) form a helical membrane-spanning segment. Residues 301–320 (NMGSLTNLLVQLDAPTLSTK) lie on the Vacuolar side of the membrane. A helical transmembrane segment spans residues 321 to 343 (LLSTYALSSTFTRLLTGIVADFF). At 344 to 347 (AKKK) the chain is on the cytoplasmic side. A helical transmembrane segment spans residues 348 to 368 (ISIKWILLTFLSLGVCAQLFL). Over 369-385 (LKMTSSASPWGLVPTGS) the chain is Vacuolar. The helical transmembrane segment at 386-406 (LVGIVYGGLFTVYPTLVLLVW) threads the bilayer. Residues 407-413 (GERSFGT) are Cytoplasmic-facing. The chain crosses the membrane as a helical span at residues 414–434 (VYGSLLIAPAIGSMIFCMLYA). Residues 435–456 (KFYDSRCMSGGGDLRNPSCISA) are Vacuolar-facing. The chain crosses the membrane as a helical span at residues 457–477 (VYKYSSIAFVVSAVLSAVVFW). Topologically, residues 478–486 (KLKSRKLRI) are cytoplasmic.

It belongs to the major facilitator superfamily.

It is found in the vacuole membrane. In terms of biological role, probable transporter. Does not act in the transport of monocarboxylic acids across the plasma membrane. The protein is Probable transporter MCH1 (MCH1) of Saccharomyces cerevisiae (strain ATCC 204508 / S288c) (Baker's yeast).